Here is a 189-residue protein sequence, read N- to C-terminus: Interferon alpha-10 (189 aa).

The signal sequence occupies residues 1–23 (MALSFSLLMAVLVLSYKSICSLG). 2 cysteine pairs are disulfide-bonded: cysteine 24-cysteine 122 and cysteine 52-cysteine 162.

The protein belongs to the alpha/beta interferon family.

The protein localises to the secreted. Functionally, produced by macrophages, IFN-alpha have antiviral activities. Interferon stimulates the production of two enzymes: a protein kinase and an oligoadenylate synthetase. In Homo sapiens (Human), this protein is Interferon alpha-10 (IFNA10).